Consider the following 614-residue polypeptide: Fructokinase-like 2, chloroplastic (614 aa).

Residues 1 to 44 (MASLSFTQFLSFPRCNADVPCLLQSHGFVKFRGERWNGKQSFSM) constitute a chloroplast transit peptide. Disordered regions lie at residues 47 to 75 (GRRK…KPSK) and 542 to 592 (GYPP…YVMK). The span at 548 to 563 (DMEEEEDDEEEDEVES) shows a compositional bias: acidic residues. Over residues 571 to 583 (ITEKEYRTSKPYD) the composition is skewed to basic and acidic residues.

Belongs to the carbohydrate kinase PfkB family. In terms of assembly, interacts with CITRX/TRXz. Binds to FLN1 and PTAC5. Associates with the plastid-encoded RNA polymerase (PEP) complex.

The protein resides in the plastid. It localises to the chloroplast. In terms of biological role, required for proper chloroplast development, most likely through regulating plastid-encoded polymerase (PEP) dependent chloroplast transcription. Acts as a component of the transcriptionally active plastid chromosome that is required for plastid gene expression. This Arabidopsis thaliana (Mouse-ear cress) protein is Fructokinase-like 2, chloroplastic.